The following is a 210-amino-acid chain: Uracil phosphoribosyltransferase (210 aa).

5-phospho-alpha-D-ribose 1-diphosphate contacts are provided by residues Arg78, Arg103, and 130–138; that span reads DPMLATGGS. Residues Ile193 and 198-200 each bind uracil; that span reads GDA. Asp199 contacts 5-phospho-alpha-D-ribose 1-diphosphate.

The protein belongs to the UPRTase family. Requires Mg(2+) as cofactor.

The enzyme catalyses UMP + diphosphate = 5-phospho-alpha-D-ribose 1-diphosphate + uracil. The protein operates within pyrimidine metabolism; UMP biosynthesis via salvage pathway; UMP from uracil: step 1/1. With respect to regulation, allosterically activated by GTP. Its function is as follows. Catalyzes the conversion of uracil and 5-phospho-alpha-D-ribose 1-diphosphate (PRPP) to UMP and diphosphate. This is Uracil phosphoribosyltransferase from Laribacter hongkongensis (strain HLHK9).